We begin with the raw amino-acid sequence, 141 residues long: Hemoglobin subunit alpha-D (141 aa).

The Globin domain occupies 1–141 (MLGAEETALV…VAAVLAEKYR (141 aa)). Heme b-binding residues include His-58 and His-87.

The protein belongs to the globin family. As to quaternary structure, heterotetramer of two alpha-D chains and two beta chains. In terms of tissue distribution, red blood cells.

Its function is as follows. Involved in oxygen transport from the lung to the various peripheral tissues. The protein is Hemoglobin subunit alpha-D (HBAD) of Phalacrocorax carbo (Great cormorant).